Here is a 427-residue protein sequence, read N- to C-terminus: Cryptic catabolic NAD-specific glutamate dehydrogenase GudB (427 aa).

Residues K80 and K107 each contribute to the substrate site. The active-site Proton donor is the K119. NAD(+) is bound by residues T203 and N234. A substrate-binding site is contributed by S361.

Belongs to the Glu/Leu/Phe/Val dehydrogenases family. In terms of assembly, homohexamer.

It catalyses the reaction L-glutamate + NAD(+) + H2O = 2-oxoglutarate + NH4(+) + NADH + H(+). Functionally, gudB seems to be intrinsically inactive, however spontaneous mutations removing a 9-bp direct repeat within the wild-type gudB sequence activated the GudB protein and allowed more-efficient utilization of amino acids of the glutamate family (called gutB1). This 3 amino acid insertion presumably causes severe destabilization of the fold of the protein, leading to an inactive enzyme that is very quickly degraded. The cryptic GudB serves as a buffer that may compensate for mutations in the rocG gene and that can also be decryptified for the utilization of glutamate as a single carbon source in the absence of arginine. It is unable to synthesize glutamate. This is Cryptic catabolic NAD-specific glutamate dehydrogenase GudB from Bacillus subtilis (strain 168).